A 236-amino-acid chain; its full sequence is Mammalian ependymin-related protein 1 (236 aa).

The signal sequence occupies residues 1–35 (MPRRAPLRVARGSLDAWLLGGLWVCALGCLCGVGM). Cystine bridges form between Cys-54-Cys-184, Cys-100-Cys-234, and Cys-125-Cys-222. N-linked (GlcNAc...) asparagine glycans are attached at residues Asn-142 and Asn-194.

The protein belongs to the ependymin family. Homodimer. Post-translationally, N-glycosylated; the glycan contains mannose-6-phosphate moieties.

It is found in the lysosome lumen. Its subcellular location is the secreted. Its function is as follows. Binds anionic lipids and gangliosides at acidic pH. The sequence is that of Mammalian ependymin-related protein 1 (EPDR1) from Bos taurus (Bovine).